Reading from the N-terminus, the 620-residue chain is 1-deoxy-D-xylulose-5-phosphate synthase (620 aa).

Thiamine diphosphate is bound by residues His-80 and 121-123; that span reads GHS. Residue Asp-152 participates in Mg(2+) binding. Thiamine diphosphate-binding positions include 153–154, Asn-181, Tyr-288, and Glu-370; that span reads GA. Mg(2+) is bound at residue Asn-181.

It belongs to the transketolase family. DXPS subfamily. Homodimer. It depends on Mg(2+) as a cofactor. Thiamine diphosphate serves as cofactor.

It carries out the reaction D-glyceraldehyde 3-phosphate + pyruvate + H(+) = 1-deoxy-D-xylulose 5-phosphate + CO2. It functions in the pathway metabolic intermediate biosynthesis; 1-deoxy-D-xylulose 5-phosphate biosynthesis; 1-deoxy-D-xylulose 5-phosphate from D-glyceraldehyde 3-phosphate and pyruvate: step 1/1. Catalyzes the acyloin condensation reaction between C atoms 2 and 3 of pyruvate and glyceraldehyde 3-phosphate to yield 1-deoxy-D-xylulose-5-phosphate (DXP). The polypeptide is 1-deoxy-D-xylulose-5-phosphate synthase (Escherichia coli O7:K1 (strain IAI39 / ExPEC)).